The sequence spans 89 residues: Three-finger toxin 3 (89 aa).

Residues 1-16 form the signal peptide; that stretch reads MKTLLLILGVVAFVYL. Disulfide bonds link Cys24/Cys47, Cys40/Cys66, Cys70/Cys81, and Cys82/Cys87.

The protein belongs to the three-finger toxin family. Ancestral subfamily. Expressed by the venom gland.

It is found in the secreted. The protein is Three-finger toxin 3 of Sistrurus catenatus edwardsii (Desert massasauga).